The sequence spans 385 residues: Probable tRNA sulfurtransferase (385 aa).

Residues 65–165 enclose the THUMP domain; sequence AILQELFSFL…KEHFLVFTER (101 aa). ATP contacts are provided by residues 183–184, 208–209, arginine 267, glycine 285, and glutamine 294; these read LL and TF.

It belongs to the ThiI family.

The protein localises to the cytoplasm. It catalyses the reaction [ThiI sulfur-carrier protein]-S-sulfanyl-L-cysteine + a uridine in tRNA + 2 reduced [2Fe-2S]-[ferredoxin] + ATP + H(+) = [ThiI sulfur-carrier protein]-L-cysteine + a 4-thiouridine in tRNA + 2 oxidized [2Fe-2S]-[ferredoxin] + AMP + diphosphate. The catalysed reaction is [ThiS sulfur-carrier protein]-C-terminal Gly-Gly-AMP + S-sulfanyl-L-cysteinyl-[cysteine desulfurase] + AH2 = [ThiS sulfur-carrier protein]-C-terminal-Gly-aminoethanethioate + L-cysteinyl-[cysteine desulfurase] + A + AMP + 2 H(+). It participates in cofactor biosynthesis; thiamine diphosphate biosynthesis. Its function is as follows. Catalyzes the ATP-dependent transfer of a sulfur to tRNA to produce 4-thiouridine in position 8 of tRNAs, which functions as a near-UV photosensor. Also catalyzes the transfer of sulfur to the sulfur carrier protein ThiS, forming ThiS-thiocarboxylate. This is a step in the synthesis of thiazole, in the thiamine biosynthesis pathway. The sulfur is donated as persulfide by IscS. This is Probable tRNA sulfurtransferase from Mycoplasma genitalium (strain ATCC 33530 / DSM 19775 / NCTC 10195 / G37) (Mycoplasmoides genitalium).